Consider the following 433-residue polypeptide: Trigger factor (433 aa).

A PPIase FKBP-type domain is found at 163 to 248 (GDTVNIDFSG…VNEIKFKEVP (86 aa)).

It belongs to the FKBP-type PPIase family. Tig subfamily.

It localises to the cytoplasm. It catalyses the reaction [protein]-peptidylproline (omega=180) = [protein]-peptidylproline (omega=0). Involved in protein export. Acts as a chaperone by maintaining the newly synthesized protein in an open conformation. Functions as a peptidyl-prolyl cis-trans isomerase. This Staphylococcus aureus (strain bovine RF122 / ET3-1) protein is Trigger factor.